A 344-amino-acid chain; its full sequence is Glucan endo-1,3-beta-glucosidase (344 aa).

An N-terminal signal peptide occupies residues 1-27 (MALTRNRPFVVVLLLGFVIMSTITIGA). The active-site Proton donor is Glu-123. Glu-268 (nucleophile) is an active-site residue.

The protein belongs to the glycosyl hydrolase 17 family.

The enzyme catalyses Hydrolysis of (1-&gt;3)-beta-D-glucosidic linkages in (1-&gt;3)-beta-D-glucans.. Its function is as follows. Implicated in the defense of plants against pathogens. The polypeptide is Glucan endo-1,3-beta-glucosidase (Vitis vinifera (Grape)).